We begin with the raw amino-acid sequence, 92 residues long: MSELEKAMVALIDVFHQYSGREGDKHKLKKSELKELINNELSHFLEEIKEQEVVDKVMETLDNDGDGECDFQEFMAFVAMVTTACHEFFEHE.

A Blocked amino end (Ser); alternate modification is found at serine 2. Residue serine 2 is modified to N-acetylserine; alternate. EF-hand domains are found at residues 13–48 (DVFHQYSGREGDKHKLKKSELKELINNELSHFLEEI) and 49–84 (KEQEVVDKVMETLDNDGDGECDFQEFMAFVAMVTTA). Position 16 (histidine 16) interacts with Zn(2+). Positions 19, 22, and 24 each coordinate Ca(2+). Histidine 26 contributes to the Zn(2+) binding site. The Ca(2+) site is built by lysine 27, glutamate 32, aspartate 62, aspartate 64, aspartate 66, glutamate 68, and glutamate 73. Positions 86 and 91 each coordinate Zn(2+).

Belongs to the S-100 family. Dimer of either two alpha chains, or two beta chains, or one alpha and one beta chain. The S100B dimer binds two molecules of STK38. Interacts with CACYBP in a calcium-dependent manner. Interacts with ATAD3A; this interaction probably occurs in the cytosol prior to ATAD3A mitochondrial targeting. Interacts with S100A6. The S100B dimer interacts with two molecules of CAPZA1. Interacts with AGER. Interacts with PPP5C (via TPR repeats); the interaction is calcium-dependent and modulates PPP5C activity. Interacts with TPPP; this interaction inhibits TPPP dimerization. Interacts with isoform CLSTN3beta of CLSTN3; interaction promotes secretion. As to expression, although predominant among the water-soluble brain proteins, S100 is also found in a variety of other tissues.

It is found in the cytoplasm. The protein localises to the nucleus. It localises to the secreted. Small zinc- and- and calcium-binding protein that is highly expressed in astrocytes and constitutes one of the most abundant soluble proteins in brain. Weakly binds calcium but binds zinc very tightly-distinct binding sites with different affinities exist for both ions on each monomer. Physiological concentrations of potassium ion antagonize the binding of both divalent cations, especially affecting high-affinity calcium-binding sites. Acts as a neurotrophic factor that promotes astrocytosis and axonal proliferation. Involved in innervation of thermogenic adipose tissue by acting as an adipocyte-derived neurotrophic factor that promotes sympathetic innervation of adipose tissue. Binds to and initiates the activation of STK38 by releasing autoinhibitory intramolecular interactions within the kinase. Interaction with AGER after myocardial infarction may play a role in myocyte apoptosis by activating ERK1/2 and p53/TP53 signaling. Could assist ATAD3A cytoplasmic processing, preventing aggregation and favoring mitochondrial localization. May mediate calcium-dependent regulation on many physiological processes by interacting with other proteins, such as TPR-containing proteins, and modulating their activity. The protein is Protein S100-B of Homo sapiens (Human).